The following is a 377-amino-acid chain: Flagellin D (377 aa).

2 coiled-coil regions span residues 103–129 (SNSKSERVAIQEEITALNDELNRIAET) and 310–339 (AFQNRFNHAISNLDNINENVNASKSRIKDT).

This sequence belongs to the bacterial flagellin family. In terms of assembly, heteromer of multiple flagellin subunits including FlaA, FlaB, FlaC, FlaD and FlaE.

The protein resides in the secreted. The protein localises to the bacterial flagellum. Its function is as follows. Flagellin is the subunit protein which polymerizes to form the filaments of bacterial flagella. FlaD is not essential for flagellar synthesis and motility. The protein is Flagellin D (flaD) of Vibrio cholerae serotype O1 (strain ATCC 39315 / El Tor Inaba N16961).